We begin with the raw amino-acid sequence, 388 residues long: MAAFKLADRLATLPPYLFAGIDKVKAEVAARGVDIISLGIGDPDMATPGFIIEAMKEAIARPANHQYPSYVGMLAFRQEVANWYDRRFGVSLDPATEVIGLIGSKEGIAHFPFAFINPGDLVLVCTPNYPVYHIATGFAGGEVQFVPLLEENDFLPDLDAIPEDTWKRAKMIFVNYPNNPTAATAPLGFYEKLVDICRRFDVIIAHDTAYTEIYYDEDNRPPSILSVPGAKDVAIEFHSLSKTYNMTGWRVGMAVGNPTLVAGLGKIKENMDSGIFQAVQEASIVALRDGDDFCRELRGIYRQRRDTVINALHKAGIQCRVPQATFYVWARVPQGHTSADFVTRVLQETGVVVTPGNGFGTPGEGFFRISLTVDNARLEEAVSRIAKL.

Tyrosine 16 and glycine 41 together coordinate substrate. Pyridoxal 5'-phosphate contacts are provided by residues tyrosine 70, 104-105 (SK), tyrosine 129, asparagine 179, tyrosine 210, and 239-241 (SLS). Substrate is bound by residues lysine 105, tyrosine 129, and asparagine 179. An N6-(pyridoxal phosphate)lysine modification is found at lysine 242. Pyridoxal 5'-phosphate is bound at residue arginine 250. Arginine 368 is a substrate binding site.

It belongs to the class-I pyridoxal-phosphate-dependent aminotransferase family. LL-diaminopimelate aminotransferase subfamily. Homodimer. Requires pyridoxal 5'-phosphate as cofactor.

The enzyme catalyses (2S,6S)-2,6-diaminopimelate + 2-oxoglutarate = (S)-2,3,4,5-tetrahydrodipicolinate + L-glutamate + H2O + H(+). It participates in amino-acid biosynthesis; L-lysine biosynthesis via DAP pathway; LL-2,6-diaminopimelate from (S)-tetrahydrodipicolinate (aminotransferase route): step 1/1. In terms of biological role, involved in the synthesis of meso-diaminopimelate (m-DAP or DL-DAP), required for both lysine and peptidoglycan biosynthesis. Catalyzes the direct conversion of tetrahydrodipicolinate to LL-diaminopimelate. The chain is LL-diaminopimelate aminotransferase from Nitratidesulfovibrio vulgaris (strain ATCC 29579 / DSM 644 / CCUG 34227 / NCIMB 8303 / VKM B-1760 / Hildenborough) (Desulfovibrio vulgaris).